We begin with the raw amino-acid sequence, 533 residues long: Lanosterol 14-alpha demethylase (533 aa).

Residue cysteine 472 coordinates heme.

It belongs to the cytochrome P450 family. It depends on heme as a cofactor.

It localises to the membrane. The catalysed reaction is a 14alpha-methyl steroid + 3 reduced [NADPH--hemoprotein reductase] + 3 O2 = a Delta(14) steroid + formate + 3 oxidized [NADPH--hemoprotein reductase] + 4 H2O + 4 H(+). It carries out the reaction a 14alpha-methyl steroid + reduced [NADPH--hemoprotein reductase] + O2 = a 14alpha-hydroxymethyl steroid + oxidized [NADPH--hemoprotein reductase] + H2O + H(+). It catalyses the reaction a 14alpha-hydroxymethyl steroid + reduced [NADPH--hemoprotein reductase] + O2 = a 14alpha-formyl steroid + oxidized [NADPH--hemoprotein reductase] + 2 H2O + H(+). The enzyme catalyses a 14alpha-formyl steroid + reduced [NADPH--hemoprotein reductase] + O2 = a Delta(14) steroid + formate + oxidized [NADPH--hemoprotein reductase] + H2O + 2 H(+). The catalysed reaction is lanosterol + 3 reduced [NADPH--hemoprotein reductase] + 3 O2 = 4,4-dimethyl-5alpha-cholesta-8,14,24-trien-3beta-ol + formate + 3 oxidized [NADPH--hemoprotein reductase] + 4 H2O + 4 H(+). It carries out the reaction lanosterol + reduced [NADPH--hemoprotein reductase] + O2 = 32-hydroxylanosterol + oxidized [NADPH--hemoprotein reductase] + H2O + H(+). It catalyses the reaction 32-hydroxylanosterol + reduced [NADPH--hemoprotein reductase] + O2 = 32-oxolanosterol + oxidized [NADPH--hemoprotein reductase] + 2 H2O + H(+). The enzyme catalyses 32-oxolanosterol + reduced [NADPH--hemoprotein reductase] + O2 = 4,4-dimethyl-5alpha-cholesta-8,14,24-trien-3beta-ol + formate + oxidized [NADPH--hemoprotein reductase] + H2O + 2 H(+). The catalysed reaction is eburicol + 3 reduced [NADPH--hemoprotein reductase] + 3 O2 = 14-demethyleburicol + formate + 3 oxidized [NADPH--hemoprotein reductase] + 4 H2O + 4 H(+). It carries out the reaction eburicol + reduced [NADPH--hemoprotein reductase] + O2 = 32-hydroxyeburicol + oxidized [NADPH--hemoprotein reductase] + H2O + H(+). It catalyses the reaction 32-hydroxyeburicol + reduced [NADPH--hemoprotein reductase] + O2 = 32-oxoeburicol + oxidized [NADPH--hemoprotein reductase] + 2 H2O + H(+). The enzyme catalyses 32-oxoeburicol + reduced [NADPH--hemoprotein reductase] + O2 = 14-demethyleburicol + formate + oxidized [NADPH--hemoprotein reductase] + H2O + 2 H(+). Its pathway is steroid biosynthesis; zymosterol biosynthesis; zymosterol from lanosterol: step 1/6. Functionally, sterol 14alpha-demethylase that plays a critical role in the third module of ergosterol biosynthesis pathway, being ergosterol the major sterol component in fungal membranes that participates in a variety of functions. The third module or late pathway involves the ergosterol synthesis itself through consecutive reactions that mainly occur in the endoplasmic reticulum (ER) membrane. In filamentous fungi, during the initial step of this module, lanosterol (lanosta-8,24-dien-3beta-ol) can be metabolized to eburicol. Sterol 14alpha-demethylase catalyzes the three-step oxidative removal of the 14alpha-methyl group (C-32) of both these sterols in the form of formate, and converts eburicol and lanosterol to 14-demethyleburicol (4,4,24-trimethylergosta-8,14,24(28)-trienol) and 4,4-dimethyl-5alpha-cholesta-8,14,24-trien-3beta-ol, respectively, which are further metabolized by other enzymes in the pathway to ergosterol. Can also use substrates not intrinsic to fungi, such as 24,25-dihydrolanosterol (DHL), producing 4,4-dimethyl-8,14-cholestadien-3-beta-ol, but at lower rates than the endogenous substrates. The chain is Lanosterol 14-alpha demethylase (ERG11) from Candida glabrata (strain ATCC 2001 / BCRC 20586 / JCM 3761 / NBRC 0622 / NRRL Y-65 / CBS 138) (Yeast).